Reading from the N-terminus, the 264-residue chain is Diphthine synthase (264 aa).

Residues Leu10, Asp87, Val90, 115–116 (SI), Leu166, Ala209, and His234 contribute to the S-adenosyl-L-methionine site.

The protein belongs to the diphthine synthase family. As to quaternary structure, homodimer.

It catalyses the reaction 2-[(3S)-amino-3-carboxypropyl]-L-histidyl-[translation elongation factor 2] + 3 S-adenosyl-L-methionine = diphthine-[translation elongation factor 2] + 3 S-adenosyl-L-homocysteine + 3 H(+). It functions in the pathway protein modification; peptidyl-diphthamide biosynthesis. S-adenosyl-L-methionine-dependent methyltransferase that catalyzes the trimethylation of the amino group of the modified target histidine residue in translation elongation factor 2 (EF-2), to form an intermediate called diphthine. The three successive methylation reactions represent the second step of diphthamide biosynthesis. This is Diphthine synthase from Thermococcus gammatolerans (strain DSM 15229 / JCM 11827 / EJ3).